We begin with the raw amino-acid sequence, 131 residues long: uncharacterized protein (131 aa).

Its subcellular location is the mitochondrion. This is an uncharacterized protein from Arabidopsis thaliana (Mouse-ear cress).